The chain runs to 337 residues: GTPase Obg (337 aa).

An Obg domain is found at 1-158 (MFIDEVRILV…KRLRLELKLL (158 aa)). Basic and acidic residues-rich tracts occupy residues 61–74 (NPEHKAERGRHGEG) and 137–146 (PTEHEPGRPG). 2 disordered regions span residues 61–83 (NPEHKAERGRHGEGSQRTGAEGR) and 119–146 (GGRGGRGNQHFATPTHQAPTEHEPGRPG). In terms of domain architecture, OBG-type G spans 159-330 (ADVGLVGFPN…LKHAMADRVL (172 aa)). GTP-binding positions include 165-172 (GFPNAGKS), 190-194 (FTTLE), 212-215 (DIPG), 282-285 (TKMD), and 311-313 (SSA). Residues Ser-172 and Thr-192 each coordinate Mg(2+).

The protein belongs to the TRAFAC class OBG-HflX-like GTPase superfamily. OBG GTPase family. In terms of assembly, monomer. Requires Mg(2+) as cofactor.

The protein resides in the cytoplasm. Its function is as follows. An essential GTPase which binds GTP, GDP and possibly (p)ppGpp with moderate affinity, with high nucleotide exchange rates and a fairly low GTP hydrolysis rate. Plays a role in control of the cell cycle, stress response, ribosome biogenesis and in those bacteria that undergo differentiation, in morphogenesis control. The protein is GTPase Obg of Solibacter usitatus (strain Ellin6076).